The primary structure comprises 145 residues: Cell wall teichoic acid glycosylation protein GtcA (145 aa).

4 consecutive transmembrane segments (helical) span residues 21–41, 52–69, 96–116, and 121–141; these read ILMY…TFWL, IANT…YFSN, FLTY…LSIN, and KIWT…WIIF.

Belongs to the GtrA family.

Its subcellular location is the cell membrane. In terms of biological role, involved in the decoration of cell wall teichoic acid with galactose and glucose. The sequence is that of Cell wall teichoic acid glycosylation protein GtcA (gtcA) from Listeria monocytogenes serovar 1/2a (strain ATCC BAA-679 / EGD-e).